Here is a 204-residue protein sequence, read N- to C-terminus: DNA-directed RNA polymerase subunit gamma (204 aa).

The Zn(2+) site is built by Cys34, Cys36, Cys49, and Cys52.

The protein belongs to the RNA polymerase beta' chain family. RpoC1 subfamily. As to quaternary structure, in cyanobacteria the RNAP catalytic core is composed of 2 alpha, 1 beta, 1 beta', 1 gamma and 1 omega subunit. When a sigma factor is associated with the core the holoenzyme is formed, which can initiate transcription. The cofactor is Zn(2+).

It catalyses the reaction RNA(n) + a ribonucleoside 5'-triphosphate = RNA(n+1) + diphosphate. In terms of biological role, DNA-dependent RNA polymerase catalyzes the transcription of DNA into RNA using the four ribonucleoside triphosphates as substrates. The polypeptide is DNA-directed RNA polymerase subunit gamma (rpoC1) (Prochlorococcus marinus (strain DV1)).